The primary structure comprises 71 residues: Small ribosomal subunit protein bS21 (71 aa).

Positions 43 to 71 (TERKRAKASAVKRHAKKLARENARRTRLY) are disordered. Over residues 46 to 59 (KRAKASAVKRHAKK) the composition is skewed to basic residues. The segment covering 60–71 (LARENARRTRLY) has biased composition (basic and acidic residues).

It belongs to the bacterial ribosomal protein bS21 family.

The polypeptide is Small ribosomal subunit protein bS21 (Pectobacterium atrosepticum (strain SCRI 1043 / ATCC BAA-672) (Erwinia carotovora subsp. atroseptica)).